The sequence spans 128 residues: uncharacterized protein (128 aa).

The VOC domain maps to 2 to 127 (KLLQIRLLVN…DHNLIEIYKM (126 aa)). Residues Glu-48 and Glu-123 each contribute to the Ni(2+) site.

The protein belongs to the glyoxalase I family.

This is an uncharacterized protein from Bacillus subtilis (strain 168).